The primary structure comprises 340 residues: GTPase Obg (340 aa).

The region spanning 1 to 159 (MDFIDEVKLY…KYVVLKLKVL (159 aa)) is the Obg domain. The OBG-type G domain maps to 160-329 (SDVGIIGMPN…LNEKLKKGSS (170 aa)). GTP-binding positions include 166 to 173 (GMPNAGKS), 191 to 195 (FTTIK), 212 to 215 (DIPG), 279 to 282 (NKCD), and 310 to 312 (GED). 2 residues coordinate Mg(2+): S173 and T193.

The protein belongs to the TRAFAC class OBG-HflX-like GTPase superfamily. OBG GTPase family. Monomer. It depends on Mg(2+) as a cofactor.

Its subcellular location is the cytoplasm. Functionally, an essential GTPase which binds GTP, GDP and possibly (p)ppGpp with moderate affinity, with high nucleotide exchange rates and a fairly low GTP hydrolysis rate. Plays a role in control of the cell cycle, stress response, ribosome biogenesis and in those bacteria that undergo differentiation, in morphogenesis control. This Wolbachia sp. subsp. Brugia malayi (strain TRS) protein is GTPase Obg.